A 346-amino-acid chain; its full sequence is uncharacterized protein (346 aa).

Residues I16–T36 form a helical membrane-spanning segment.

It is found in the membrane. This is an uncharacterized protein from Methanocaldococcus jannaschii (strain ATCC 43067 / DSM 2661 / JAL-1 / JCM 10045 / NBRC 100440) (Methanococcus jannaschii).